Reading from the N-terminus, the 208-residue chain is MIERTFVKENVKRLLIDEYFKKELSKAGYSHCDIRKTPIGTKIIIYAEKPGFVIGRRGSRIRELTETLAKEFGVEKPQIDVKPVENPDLDAQVVAQKVAQSLERGLHFRRVGHTAVRRVMNAGAKGVIVIISGKLTGERARTEKFMAGYMKHCGEPAEELVDKGRAIAKTKPGVIGVTVKIMRPDVLLPDEIIIKEDAEVKHVVEEEQ.

The KH type-2 domain maps to isoleucine 16–glutamate 85.

It belongs to the universal ribosomal protein uS3 family. In terms of assembly, part of the 30S ribosomal subunit.

In terms of biological role, binds the lower part of the 30S subunit head. This Methanocaldococcus jannaschii (strain ATCC 43067 / DSM 2661 / JAL-1 / JCM 10045 / NBRC 100440) (Methanococcus jannaschii) protein is Small ribosomal subunit protein uS3.